A 429-amino-acid chain; its full sequence is Enolase (429 aa).

A (2R)-2-phosphoglycerate-binding site is contributed by glutamine 163. Glutamate 205 (proton donor) is an active-site residue. Positions 242, 285, and 312 each coordinate Mg(2+). Residues lysine 337, arginine 366, serine 367, and lysine 388 each coordinate (2R)-2-phosphoglycerate. The active-site Proton acceptor is lysine 337.

This sequence belongs to the enolase family. As to quaternary structure, component of the RNA degradosome, a multiprotein complex involved in RNA processing and mRNA degradation. Mg(2+) is required as a cofactor.

It is found in the cytoplasm. Its subcellular location is the secreted. It localises to the cell surface. The catalysed reaction is (2R)-2-phosphoglycerate = phosphoenolpyruvate + H2O. The protein operates within carbohydrate degradation; glycolysis; pyruvate from D-glyceraldehyde 3-phosphate: step 4/5. Functionally, catalyzes the reversible conversion of 2-phosphoglycerate (2-PG) into phosphoenolpyruvate (PEP). It is essential for the degradation of carbohydrates via glycolysis. The sequence is that of Enolase from Alkalilimnicola ehrlichii (strain ATCC BAA-1101 / DSM 17681 / MLHE-1).